Here is a 422-residue protein sequence, read N- to C-terminus: MASFPDFVNENEIARSRTIGELITPTSPFEQKYGRENWTVAFAPDGSYFAWSQGHRIVKLVPWSRCLKNFTACSTKNGVNLTNGRLSRQNSDLGQRNKPIEHTIDCGDIVWSLAFGSSVPEKQSRCVNIEWHRFKFGQDQLLLATGLSNGRIKIWDVYTGKLLLNLMDHTEVVRDLTFAPDGSLILVSASRDKTLRVWDLKDDGNMMKVLRGHQNWVYCCAFSPDSSMLCSVGAGKAVFLWDMDKYTMIRKLDGHYNDVVACEFSPDGALLATASYDTRVYVWDPHIGSILFEFGHLFPPPTPIFAGGDNGRWVKSVSFSHDGVHIASLADDNLVRFWRIDKSYPVEVAPLSKGLCCAFSTDGSVLAAGTQDGNAYFWSTPKYVSSLQHLCRMAIRRVMNTNEVKKLPIPQKIMEFLTYQTM.

5 WD repeats span residues 124 to 165 (SRCV…LLLN), 168 to 208 (DHTE…NMMK), 212 to 251 (GHQNWVYCCAFSPDSSMLCSVGAGKAVFLWDMDKYTMIRK), 254 to 293 (GHYNDVVACEFSPDGALLATASYDTRVYVWDPHIGSILFE), and 309 to 346 (DNGRWVKSVSFSHDGVHIASLADDNLVRFWRIDKSYPV). Positions 374 to 422 (NAYFWSTPKYVSSLQHLCRMAIRRVMNTNEVKKLPIPQKIMEFLTYQTM) constitute an SOCS box domain.

Component of a probable ECS E3 ubiquitin-protein ligase complex that contains the Elongin BC complex.

The protein operates within protein modification; protein ubiquitination. Probable substrate-recognition component of a SCF-like ECS (Elongin-Cullin-SOCS-box protein) E3 ubiquitin-protein ligase complex which mediates the ubiquitination and subsequent proteasomal degradation of target proteins. The protein is WD repeat and SOCS box-containing protein 1 (wsb1) of Xenopus tropicalis (Western clawed frog).